A 107-amino-acid chain; its full sequence is Ferredoxin 1 (107 aa).

4Fe-4S ferredoxin-type domains lie at 2-30 (TFVV…YEGP) and 31-60 (NFLV…SEDE). Positions 9 and 17 each coordinate [3Fe-4S] cluster. Residues Cys-21, Cys-40, Cys-43, and Cys-46 each contribute to the [4Fe-4S] cluster site. Cys-50 lines the [3Fe-4S] cluster pocket.

It depends on [4Fe-4S] cluster as a cofactor. The cofactor is [3Fe-4S] cluster.

Its function is as follows. Ferredoxins are iron-sulfur proteins that transfer electrons in a wide variety of metabolic reactions. This Stutzerimonas stutzeri (Pseudomonas stutzeri) protein is Ferredoxin 1.